We begin with the raw amino-acid sequence, 309 residues long: Homoserine kinase (309 aa).

Residue 91–101 (PIGSGLGSSAC) participates in ATP binding.

It belongs to the GHMP kinase family. Homoserine kinase subfamily.

The protein localises to the cytoplasm. The enzyme catalyses L-homoserine + ATP = O-phospho-L-homoserine + ADP + H(+). It functions in the pathway amino-acid biosynthesis; L-threonine biosynthesis; L-threonine from L-aspartate: step 4/5. Its function is as follows. Catalyzes the ATP-dependent phosphorylation of L-homoserine to L-homoserine phosphate. In Yersinia pseudotuberculosis serotype O:1b (strain IP 31758), this protein is Homoserine kinase.